The primary structure comprises 136 residues: Nucleoside diphosphate kinase (136 aa).

Residues K10, F58, R86, T92, R104, and N114 each coordinate ATP. H117 (pros-phosphohistidine intermediate) is an active-site residue.

It belongs to the NDK family. Homotetramer. It depends on Mg(2+) as a cofactor.

It is found in the cytoplasm. The catalysed reaction is a 2'-deoxyribonucleoside 5'-diphosphate + ATP = a 2'-deoxyribonucleoside 5'-triphosphate + ADP. The enzyme catalyses a ribonucleoside 5'-diphosphate + ATP = a ribonucleoside 5'-triphosphate + ADP. Its function is as follows. Major role in the synthesis of nucleoside triphosphates other than ATP. The ATP gamma phosphate is transferred to the NDP beta phosphate via a ping-pong mechanism, using a phosphorylated active-site intermediate. This chain is Nucleoside diphosphate kinase, found in Saccharopolyspora erythraea (strain ATCC 11635 / DSM 40517 / JCM 4748 / NBRC 13426 / NCIMB 8594 / NRRL 2338).